Here is a 176-residue protein sequence, read N- to C-terminus: Beta-carotene hydroxylase (176 aa).

One can recognise a Fatty acid hydroxylase domain in the interval 10 to 126 (LSVIAMEGIA…AHRLHHAVRG (117 aa)). The disordered stretch occupies residues 152-176 (HGRPPKRDAAKDRPDAASPSSSSPE). The span at 156–166 (PKRDAAKDRPD) shows a compositional bias: basic and acidic residues. The span at 167 to 176 (AASPSSSSPE) shows a compositional bias: low complexity.

The protein belongs to the sterol desaturase family.

The protein operates within carotenoid biosynthesis; zeaxanthin biosynthesis. Catalyzes the hydroxylation reaction from beta-carotene to zeaxanthin. The polypeptide is Beta-carotene hydroxylase (crtZ) (Pseudescherichia vulneris (Escherichia vulneris)).